Consider the following 175-residue polypeptide: Transcription factor HES-3 (175 aa).

Positions 1–49 (MEKKRRARINVSLEQLRSLLERHYSHQIRKRKLEKADILELSVKYMRSL) constitute a bHLH domain. Positions 65 to 98 (YPSGFQGGLRGVSQRLRPGEGDSGLRCPLLLQRR) constitute an Orange domain. The interval 126-166 (RAAGGSHSPQSPLPLPGGLLESSTDVVAPHPASNCQAESTR) is disordered. Positions 129-148 (GGSHSPQSPLPLPGGLLESS) are enriched in low complexity. Positions 172–175 (WRPW) match the WRPW motif motif.

As to quaternary structure, transcription repression requires formation of a complex with a corepressor protein of the Groucho/TLE family.

The protein resides in the nucleus. Its function is as follows. Transcriptional repressor of genes that require a bHLH protein for their transcription. This is Transcription factor HES-3 (Hes3) from Mus musculus (Mouse).